A 94-amino-acid chain; its full sequence is Large ribosomal subunit protein bL25 (94 aa).

It belongs to the bacterial ribosomal protein bL25 family. In terms of assembly, part of the 50S ribosomal subunit; part of the 5S rRNA/L5/L18/L25 subcomplex. Contacts the 5S rRNA. Binds to the 5S rRNA independently of L5 and L18.

Functionally, this is one of the proteins that binds to the 5S RNA in the ribosome where it forms part of the central protuberance. This is Large ribosomal subunit protein bL25 from Salmonella agona (strain SL483).